The following is a 1131-amino-acid chain: Probable pre-mRNA-splicing factor ATP-dependent RNA helicase mog-1 (1131 aa).

Composition is skewed to basic and acidic residues over residues 1–12, 65–122, 139–148, 160–173, 180–225, and 407–416; these read MSDKRADGRLEG, RGVT…DRSG, WDQDDREGSS, RGERDRKRYMDSER, RSER…WEEE, and GNYKESHQFA. Disordered regions lie at residues 1–225 and 389–416; these read MSDK…WEEE and MGVKEKKDETADPEDDDSGNYKESHQFA. The region spanning 451–614 is the Helicase ATP-binding domain; it reads MNVIRENNVV…FGGNCPTFTI (164 aa). 464–471 lines the ATP pocket; that stretch reads GETGSGKT. Positions 561–564 match the DEAH box motif; sequence DEAH. The region spanning 629–812 is the Helicase C-terminal domain; sequence PVEDYVDAAV…NVVLLLKSLG (184 aa). 2 stretches are compositionally biased toward basic and acidic residues: residues 1085 to 1114 and 1121 to 1131; these read EMREAQKEMERRKEESDKAFKRPESSRRVV and ARSERRKLWGL. Positions 1085 to 1131 are disordered; it reads EMREAQKEMERRKEESDKAFKRPESSRRVVEVGSKSARSERRKLWGL.

Belongs to the DEAD box helicase family. DEAH subfamily. PRP16 sub-subfamily.

The protein localises to the nucleus. The enzyme catalyses ATP + H2O = ADP + phosphate + H(+). Its function is as follows. Probable ATP-binding RNA helicase involved in pre-mRNA splicing. This chain is Probable pre-mRNA-splicing factor ATP-dependent RNA helicase mog-1 (mog-1), found in Caenorhabditis elegans.